A 197-amino-acid chain; its full sequence is Recombination protein RecR (197 aa).

The C4-type zinc finger occupies 56–71 (CHVCGNYCESDTCNIC). The region spanning 79–174 (RIICVVEESK…KITKLASGIP (96 aa)) is the Toprim domain.

It belongs to the RecR family.

Its function is as follows. May play a role in DNA repair. It seems to be involved in an RecBC-independent recombinational process of DNA repair. It may act with RecF and RecO. The sequence is that of Recombination protein RecR from Fusobacterium nucleatum subsp. nucleatum (strain ATCC 25586 / DSM 15643 / BCRC 10681 / CIP 101130 / JCM 8532 / KCTC 2640 / LMG 13131 / VPI 4355).